A 234-amino-acid polypeptide reads, in one-letter code: Sugar fermentation stimulation protein A (234 aa).

Residues 201 to 220 (LLSEAQNKGVEVLAYKAELS) constitute a DNA-binding region (H-T-H motif).

It belongs to the SfsA family.

Binds to DNA non-specifically. Could be a regulatory factor involved in maltose metabolism. This chain is Sugar fermentation stimulation protein A, found in Salmonella choleraesuis (strain SC-B67).